The chain runs to 469 residues: Probable acetate kinase (469 aa).

Asn30 provides a ligand contact to Mg(2+). Position 37 (Lys37) interacts with ATP. Residue Arg122 coordinates substrate. Asp179 serves as the catalytic Proton donor/acceptor. His239–Gly243 contributes to the ATP binding site. Residue Glu453 coordinates Mg(2+).

This sequence belongs to the acetokinase family. Requires Mg(2+) as cofactor.

It carries out the reaction acetate + ATP = acetyl phosphate + ADP. The protein operates within metabolic intermediate biosynthesis; acetyl-CoA biosynthesis; acetyl-CoA from acetate: step 1/2. This Neurospora crassa (strain ATCC 24698 / 74-OR23-1A / CBS 708.71 / DSM 1257 / FGSC 987) protein is Probable acetate kinase.